Reading from the N-terminus, the 422-residue chain is Tryptophan synthase beta chain 1 (422 aa).

Lysine 107 carries the post-translational modification N6-(pyridoxal phosphate)lysine.

It belongs to the TrpB family. In terms of assembly, tetramer of two alpha and two beta chains. The cofactor is pyridoxal 5'-phosphate.

The enzyme catalyses (1S,2R)-1-C-(indol-3-yl)glycerol 3-phosphate + L-serine = D-glyceraldehyde 3-phosphate + L-tryptophan + H2O. It functions in the pathway amino-acid biosynthesis; L-tryptophan biosynthesis; L-tryptophan from chorismate: step 5/5. The beta subunit is responsible for the synthesis of L-tryptophan from indole and L-serine. In Sulfurisphaera tokodaii (strain DSM 16993 / JCM 10545 / NBRC 100140 / 7) (Sulfolobus tokodaii), this protein is Tryptophan synthase beta chain 1 (trpB1).